The chain runs to 764 residues: Kinesin-like protein KIN-14N (764 aa).

The tract at residues 1 to 50 (MSTRATRPGMLHQKENAADAQAGKRQRTAAGSAARAPLSANAAPPAPDPA) is disordered. Positions 29–50 (AAGSAARAPLSANAAPPAPDPA) are enriched in low complexity. The stretch at 105–416 (AEIGKLNGLL…RLHNTILELK (312 aa)) forms a coiled coil. In terms of domain architecture, Kinesin motor spans 418–747 (NIRVFCRVRP…LRFAARVNSC (330 aa)). An ATP-binding site is contributed by 498-505 (GQTGSGKT).

Belongs to the TRAFAC class myosin-kinesin ATPase superfamily. Kinesin family. KIN-14 subfamily.

The polypeptide is Kinesin-like protein KIN-14N (Oryza sativa subsp. japonica (Rice)).